Here is a 675-residue protein sequence, read N- to C-terminus: DNA ligase (675 aa).

Residues 43–47, 92–93, and glutamate 122 each bind NAD(+); these read DYEYD and SM. Residue lysine 124 is the N6-AMP-lysine intermediate of the active site. 4 residues coordinate NAD(+): arginine 145, glutamate 179, lysine 295, and lysine 319. Zn(2+) contacts are provided by cysteine 413, cysteine 416, cysteine 431, and cysteine 436. A BRCT domain is found at 597 to 675; the sequence is SPDGYYKGKK…ETEAIAKFEQ (79 aa).

Belongs to the NAD-dependent DNA ligase family. LigA subfamily. Mg(2+) serves as cofactor. Requires Mn(2+) as cofactor.

The catalysed reaction is NAD(+) + (deoxyribonucleotide)n-3'-hydroxyl + 5'-phospho-(deoxyribonucleotide)m = (deoxyribonucleotide)n+m + AMP + beta-nicotinamide D-nucleotide.. DNA ligase that catalyzes the formation of phosphodiester linkages between 5'-phosphoryl and 3'-hydroxyl groups in double-stranded DNA using NAD as a coenzyme and as the energy source for the reaction. It is essential for DNA replication and repair of damaged DNA. The protein is DNA ligase of Pediococcus pentosaceus (strain ATCC 25745 / CCUG 21536 / LMG 10740 / 183-1w).